A 698-amino-acid polypeptide reads, in one-letter code: Glycine--tRNA ligase beta subunit (698 aa).

The protein belongs to the class-II aminoacyl-tRNA synthetase family. Tetramer of two alpha and two beta subunits.

The protein localises to the cytoplasm. The enzyme catalyses tRNA(Gly) + glycine + ATP = glycyl-tRNA(Gly) + AMP + diphosphate. The sequence is that of Glycine--tRNA ligase beta subunit from Xanthomonas campestris pv. campestris (strain B100).